The sequence spans 216 residues: Small ribosomal subunit protein uS5 (216 aa).

The tract at residues 1–55 (MDRKLENQKDLLNQDPKVELNSQSVAKNPLNSREVKPIQRRRPLRKNSRDKNSKP) is disordered. The span at 20 to 31 (LNSQSVAKNPLN) shows a compositional bias: polar residues. Positions 57-120 (FEERVIAIHR…KDAQNRLVSV (64 aa)) constitute an S5 DRBM domain.

Belongs to the universal ribosomal protein uS5 family. In terms of assembly, part of the 30S ribosomal subunit. Contacts proteins S4 and S8.

In terms of biological role, with S4 and S12 plays an important role in translational accuracy. Located at the back of the 30S subunit body where it stabilizes the conformation of the head with respect to the body. The sequence is that of Small ribosomal subunit protein uS5 from Mesomycoplasma hyopneumoniae (strain J / ATCC 25934 / NCTC 10110) (Mycoplasma hyopneumoniae).